The following is a 707-amino-acid chain: Choline transporter-like protein 4 (707 aa).

Over 1 to 32 (MGEKQDPDKAYGKPAKYDPSFRGPIRNRSCTD) the chain is Cytoplasmic. The helical transmembrane segment at 33–53 (IICCVLFFVFILGYIAVGLVA) threads the bilayer. Topologically, residues 54 to 226 (WVYGDPQQVL…KIFEDFAQSW (173 aa)) are extracellular. N-linked (GlcNAc...) asparagine glycosylation is found at Asn67, Asn142, Asn184, and Asn195. Residues 227-247 (YWILAALGVALVLSLLFVLLL) traverse the membrane as a helical segment. Over 248–249 (RL) the chain is Cytoplasmic. A helical transmembrane segment spans residues 250 to 270 (VAGPLVFVLIIGVLGVLAYGI). The Extracellular portion of the chain corresponds to 271–306 (YHCWNEYRLLRDKGASISQLGFTTNLSAYSSVQETW). Asn295 is a glycosylation site (N-linked (GlcNAc...) asparagine). Residues 307–327 (LAALILLAVLEGILLLMLIFL) traverse the membrane as a helical segment. Topologically, residues 328-355 (RQRIRIAIALLEEASRAVGQMMSTLFYP) are cytoplasmic. The helical transmembrane segment at 356–376 (LVTFVLLLVCIAYWAMTALYL) threads the bilayer. At 377–452 (ATSGQPQYVL…GVLGLFWTIN (76 aa)) the chain is on the extracellular side. 3 N-linked (GlcNAc...) asparagine glycosylation sites follow: Asn390, Asn402, and Asn413. The chain crosses the membrane as a helical span at residues 453–473 (WVLALGQCVLAGAFASFYWAF). Residues 474 to 498 (HKPRDIPTFPLSSAFIRTLRYHTGS) are Cytoplasmic-facing. Residues 499-519 (LAFGALILTLVQIARAILEYI) traverse the membrane as a helical segment. Residues 520 to 557 (DHKLRGAQNPVARCIMCCFKCCLWCLEKFIKFLNRNAY) are Extracellular-facing. A helical transmembrane segment spans residues 558 to 578 (IMIAIYGKNFCVSAKNAFMLL). At 579–594 (MRNIVRVVVLDKVTDL) the chain is on the cytoplasmic side. Residues 595–615 (LLFFGKLLVVGGVGVLSFFFF) form a helical membrane-spanning segment. The Extracellular portion of the chain corresponds to 616 to 635 (TGRIQGLGKDFESPQLNYYW). The chain crosses the membrane as a helical span at residues 636–656 (LPIMTSIMGAYVIASGFFSVF). At 657–707 (GMCVDTLFLCFLEDLERNDGSLDRPYYMSKALLKILGKKNEVPSGDKKRKK) the chain is on the cytoplasmic side.

It belongs to the CTL (choline transporter-like) family. Post-translationally, N-glycosylated; N-glycosylation of Asn-677 and Asn-390 is required for a proper thiamine pyrophosphate uptake.

The protein localises to the membrane. Its subcellular location is the apical cell membrane. It carries out the reaction choline(out) + n H(+)(in) = choline(in) + n H(+)(out). The catalysed reaction is thiamine diphosphate(out) = thiamine diphosphate(in). In terms of biological role, choline transporter that plays a role in the choline-acetylcholine system and is required to the efferent innervation of hair cells in the olivocochlear bundle for the maintenance of physiological function of outer hair cells and the protection of hair cells from acoustic injury. Also described as a thiamine pyrophosphate transporter in colon, may mediate the absorption of microbiota-generated thiamine pyrophosphate and contribute to host thiamine (vitamin B1) homeostasis. The sequence is that of Choline transporter-like protein 4 from Sus scrofa (Pig).